Here is a 201-residue protein sequence, read N- to C-terminus: Ribosome maturation factor RimM (201 aa).

The PRC barrel domain occupies 94 to 168; that stretch reads EDEYYHADLI…RLVADPPLGL (75 aa). Positions 164 to 201 are disordered; sequence PPLGLLDDTRPPAGVEGEVEEDPGVGIDEDGDGKGGAS. A compositionally biased stretch (acidic residues) spans 180-194; that stretch reads GEVEEDPGVGIDEDG.

The protein belongs to the RimM family. Binds ribosomal protein uS19.

It localises to the cytoplasm. Functionally, an accessory protein needed during the final step in the assembly of 30S ribosomal subunit, possibly for assembly of the head region. Essential for efficient processing of 16S rRNA. May be needed both before and after RbfA during the maturation of 16S rRNA. It has affinity for free ribosomal 30S subunits but not for 70S ribosomes. This Rhodospirillum rubrum (strain ATCC 11170 / ATH 1.1.1 / DSM 467 / LMG 4362 / NCIMB 8255 / S1) protein is Ribosome maturation factor RimM.